Consider the following 310-residue polypeptide: 4-hydroxyproline 2-epimerase (310 aa).

Cys85 serves as the catalytic Proton acceptor. Residues 86–87 (GH), His205, and Asp231 each bind substrate. Residue Cys235 is the Proton donor of the active site. 236-237 (GT) lines the substrate pocket.

This sequence belongs to the proline racemase family.

The catalysed reaction is trans-4-hydroxy-L-proline = cis-4-hydroxy-D-proline. Its function is as follows. Catalyzes the epimerization of trans-4-hydroxy-L-proline (t4LHyp) to cis-4-hydroxy-D-proline (c4DHyp). May be involved in a degradation pathway of t4LHyp, which would allow L.aggregata to grow on t4LHyp as a sole carbon source. Displays no proline racemase activity. In Roseibium aggregatum (strain ATCC 25650 / DSM 13394 / JCM 20685 / NBRC 16684 / NCIMB 2208 / IAM 12614 / B1) (Stappia aggregata), this protein is 4-hydroxyproline 2-epimerase.